Reading from the N-terminus, the 562-residue chain is Actin-related protein 8 (562 aa).

248-251 (DVGD) is an ATP binding site.

This sequence belongs to the actin family. ARP8 subfamily. As to quaternary structure, component of the chromatin remodeling Ino80 complex. Exists as monomers and dimers, but the dimer is most probably the biologically relevant form required for stable interactions with histones that exploits the twofold symmetry of the nucleosome core.

The protein localises to the nucleus. In terms of biological role, plays an important role in the functional organization of mitotic chromosomes. Exhibits low basal ATPase activity, and unable to polymerize. Proposed core component of the chromatin remodeling INO80 complex which is involved in transcriptional regulation, DNA replication and probably DNA repair. Strongly prefer nucleosomes and H3-H4 tetramers over H2A-H2B dimers, suggesting it may act as a nucleosome recognition module within the complex. The protein is Actin-related protein 8 of Aedes aegypti (Yellowfever mosquito).